Reading from the N-terminus, the 233-residue chain is Opacity protein opA67 (233 aa).

A signal peptide is located at residue A1.

The protein belongs to the opacity porin family.

It is found in the cell outer membrane. Its function is as follows. Implicated in a number of adherence functions. OPA proteins are implicated in pathogenesis and are subject to phase variation. The chain is Opacity protein opA67 from Neisseria gonorrhoeae.